The chain runs to 164 residues: ATP synthase subunit b 2 (164 aa).

The helical transmembrane segment at 4-24 (TFWAFVGLVLFLALLVYFEVP) threads the bilayer.

This sequence belongs to the ATPase B chain family. In terms of assembly, F-type ATPases have 2 components, F(1) - the catalytic core - and F(0) - the membrane proton channel. F(1) has five subunits: alpha(3), beta(3), gamma(1), delta(1), epsilon(1). F(0) has three main subunits: a(1), b(2) and c(10-14). The alpha and beta chains form an alternating ring which encloses part of the gamma chain. F(1) is attached to F(0) by a central stalk formed by the gamma and epsilon chains, while a peripheral stalk is formed by the delta and b chains.

The protein resides in the cell inner membrane. In terms of biological role, f(1)F(0) ATP synthase produces ATP from ADP in the presence of a proton or sodium gradient. F-type ATPases consist of two structural domains, F(1) containing the extramembraneous catalytic core and F(0) containing the membrane proton channel, linked together by a central stalk and a peripheral stalk. During catalysis, ATP synthesis in the catalytic domain of F(1) is coupled via a rotary mechanism of the central stalk subunits to proton translocation. Its function is as follows. Component of the F(0) channel, it forms part of the peripheral stalk, linking F(1) to F(0). The polypeptide is ATP synthase subunit b 2 (Bartonella henselae (strain ATCC 49882 / DSM 28221 / CCUG 30454 / Houston 1) (Rochalimaea henselae)).